Consider the following 316-residue polypeptide: MSKRKVAIIGSGNIGTDLMIKILRHGQHLEMAVMVGIDPQSDGLARARRMGVATTHEGVIGLMNMPEFADIDIVFDATSAGAHVKNDAALREAKPDIRLIDLTPAAIGPYCVPVVNLEENVDQLNVNMVTCGGQATIPMVAAVSRVARVHYAEIIASIASKSAGPGTRANIDEFTETTSRAIEVVGGAAKGKAIIVLNPAEPPLMMRDTVYVLSDEASQDDIEASINEMAEAVQAYVPGYRLKQRVQFEVIPQDKPVNLPGVGQFSGLKTAVWLEVEGAAHYLPAYAGNLDIMTSSALATAEKMAQSLARKAGEAA.

11-14 (SGNI) lines the NAD(+) pocket. The active-site Acyl-thioester intermediate is C131. NAD(+) is bound by residues 162 to 170 (SAGPGTRAN) and N289.

The protein belongs to the acetaldehyde dehydrogenase family. Interacts with MhpE.

The catalysed reaction is acetaldehyde + NAD(+) + CoA = acetyl-CoA + NADH + H(+). It functions in the pathway aromatic compound metabolism; 3-phenylpropanoate degradation. Functionally, catalyzes the conversion of acetaldehyde to acetyl-CoA, using NAD(+) and coenzyme A. Is the final enzyme in the meta-cleavage pathway for the degradation of aromatic compounds. The polypeptide is Acetaldehyde dehydrogenase (Escherichia coli O7:K1 (strain IAI39 / ExPEC)).